Consider the following 475-residue polypeptide: UDP-glycosyltransferase 76E1 (475 aa).

The active-site Proton acceptor is the histidine 19. Histidine 19 is a binding site for an anthocyanidin. The Charge relay role is filled by aspartate 109. Threonine 131, alanine 329, glutamine 331, histidine 346, tryptophan 349, asparagine 350, serine 351, and glutamate 354 together coordinate UDP-alpha-D-glucose. Alanine 369 contacts an anthocyanidin. UDP-alpha-D-glucose contacts are provided by aspartate 370 and glutamine 371.

It belongs to the UDP-glycosyltransferase family. In terms of tissue distribution, expressed in flowers and fruits.

The protein resides in the cytoplasm. It localises to the nucleus. The enzyme catalyses 2-cis-(+)-abscisate + UDP-alpha-D-glucose = beta-D-glucopyranosyl cis-(+)-abscisate + UDP. Functionally, glucosyltransferase acting on abscisic acid (ABA) but not on auxin (IAA). In Solanum lycopersicum (Tomato), this protein is UDP-glycosyltransferase 76E1.